The primary structure comprises 144 residues: Transcriptional regulator MraZ (144 aa).

SpoVT-AbrB domains are found at residues 5–50 (TFNH…ALPQ) and 81–124 (AHEV…DRAA).

It belongs to the MraZ family. In terms of assembly, forms oligomers.

It is found in the cytoplasm. Its subcellular location is the nucleoid. This chain is Transcriptional regulator MraZ, found in Anaeromyxobacter dehalogenans (strain 2CP-C).